A 163-amino-acid polypeptide reads, in one-letter code: Cell division protein SepF (163 aa).

Residues Ser-25–Thr-53 form a disordered region. A compositionally biased stretch (basic and acidic residues) spans Ser-30–Arg-51.

The protein belongs to the SepF family. In terms of assembly, homodimer. Interacts with FtsZ.

It localises to the cytoplasm. Functionally, cell division protein that is part of the divisome complex and is recruited early to the Z-ring. Probably stimulates Z-ring formation, perhaps through the cross-linking of FtsZ protofilaments. Its function overlaps with FtsA. The polypeptide is Cell division protein SepF (Heliobacterium modesticaldum (strain ATCC 51547 / Ice1)).